The following is a 310-amino-acid chain: Methionyl-tRNA formyltransferase (310 aa).

(6S)-5,6,7,8-tetrahydrofolate is bound at residue serine 110–proline 113.

Belongs to the Fmt family.

The catalysed reaction is L-methionyl-tRNA(fMet) + (6R)-10-formyltetrahydrofolate = N-formyl-L-methionyl-tRNA(fMet) + (6S)-5,6,7,8-tetrahydrofolate + H(+). In terms of biological role, attaches a formyl group to the free amino group of methionyl-tRNA(fMet). The formyl group appears to play a dual role in the initiator identity of N-formylmethionyl-tRNA by promoting its recognition by IF2 and preventing the misappropriation of this tRNA by the elongation apparatus. The chain is Methionyl-tRNA formyltransferase from Clostridium tetani (strain Massachusetts / E88).